A 528-amino-acid chain; its full sequence is Inorganic phosphate transporter 1-2 (528 aa).

Over 1–24 the chain is Cytoplasmic; it reads MAGSQLNVLVKLDQAKTQWYHFMA. A helical membrane pass occupies residues 25-45; that stretch reads IVIAGMGFFTDAYDLFCIALV. Topologically, residues 46–71 are extracellular; the sequence is TKLLGRLYYTDITKPNPGTLPPNVSS. The chain crosses the membrane as a helical span at residues 72–92; sequence AVTGVALCGTLAGQLFFGWLG. Topologically, residues 93–99 are cytoplasmic; sequence DKLGRKS. A helical membrane pass occupies residues 100–120; sequence VYGFTLILMVVCSIASGLSFG. At 121–125 the chain is on the extracellular side; sequence HTPKS. The helical transmembrane segment at 126–146 threads the bilayer; that stretch reads VIATLCFFRFWLGFGIGGDYP. At 147–163 the chain is on the cytoplasmic side; it reads LSATIMSEYASKKTRGA. Residues 164–184 traverse the membrane as a helical segment; the sequence is FIAAVFAMQGFGILFGAIVAL. The Extracellular portion of the chain corresponds to 185-212; the sequence is VVSAGFRHAYPAPSYAQNPAASLAPQAD. Residues 213 to 232 form a helical membrane-spanning segment; sequence YTWRLILMFGTIPAGLTYYW. Residues 233–296 are Cytoplasmic-facing; it reads RMKMPETARY…RQFMKRHGMH (64 aa). A helical transmembrane segment spans residues 297–317; sequence LLATTSTWFLLDIAFYSQNLF. Over 318-348 the chain is Extracellular; that stretch reads QKDIFSKVGWIPPAKTMNALEELYRISRAQA. A helical transmembrane segment spans residues 349 to 369; it reads LIALCGTIPGYWFTVAFIDIV. The Cytoplasmic segment spans residues 370 to 371; the sequence is GR. A helical transmembrane segment spans residues 372-392; that stretch reads FWIQIMGFFMMTVFMLALGVP. The Extracellular portion of the chain corresponds to 393-405; the sequence is YDHWTHPAHHTGF. The helical transmembrane segment at 406 to 426 threads the bilayer; the sequence is VVLYALTFFFANFGPNSTTFI. Residues 427–442 lie on the Cytoplasmic side of the membrane; that stretch reads VPAEIFPARLRSTCHG. A helical membrane pass occupies residues 443-463; that stretch reads ISAASGKAGAIIGAFGFLYAA. Residues 464-481 are Extracellular-facing; sequence QDQHNPDAGYSRGIGIRN. The chain crosses the membrane as a helical span at residues 482–502; that stretch reads ALFVLAGTNFLGMLMTLLVPE. Residues 503 to 528 are Cytoplasmic-facing; that stretch reads SKGLSLEEMSKDNVVDETAQEAIAQA.

The protein belongs to the major facilitator superfamily. Phosphate:H(+) symporter (TC 2.A.1.9) family. In terms of tissue distribution, expressed in the root stele and leaf phloem and xylem.

The protein resides in the membrane. Functionally, low-affinity transporter for inorganic phosphate (Pi). Involved in internal Pi transport from root to shoot. Responsible for most of the PHR2-mediated accumulation of excess shoot Pi under abundant Pi conditions, but not for PHO2-mediated accumulation of excess shoot Pi. Acts as a H(+):phosphate symporter. This chain is Inorganic phosphate transporter 1-2 (PTH1-2), found in Oryza sativa subsp. japonica (Rice).